A 72-amino-acid polypeptide reads, in one-letter code: Translation initiation factor IF-1 (72 aa).

The 71-residue stretch at 2–72 (AKEDVIEIQG…TKGRITYRFK (71 aa)) folds into the S1-like domain.

Belongs to the IF-1 family. In terms of assembly, component of the 30S ribosomal translation pre-initiation complex which assembles on the 30S ribosome in the order IF-2 and IF-3, IF-1 and N-formylmethionyl-tRNA(fMet); mRNA recruitment can occur at any time during PIC assembly.

It is found in the cytoplasm. Its function is as follows. One of the essential components for the initiation of protein synthesis. Stabilizes the binding of IF-2 and IF-3 on the 30S subunit to which N-formylmethionyl-tRNA(fMet) subsequently binds. Helps modulate mRNA selection, yielding the 30S pre-initiation complex (PIC). Upon addition of the 50S ribosomal subunit IF-1, IF-2 and IF-3 are released leaving the mature 70S translation initiation complex. The sequence is that of Translation initiation factor IF-1 from Lactiplantibacillus plantarum (strain ATCC BAA-793 / NCIMB 8826 / WCFS1) (Lactobacillus plantarum).